Reading from the N-terminus, the 838-residue chain is Adenylate cyclase (838 aa).

The segment at 1–541 (MNYDLFSAQK…DLRLSFPVTV (541 aa)) is catalytic. Residues 547–838 (EDLTHACEIR…VPFHSRLAMS (292 aa)) form a regulatory region.

Belongs to the adenylyl cyclase class-1 family.

Its subcellular location is the cytoplasm. It catalyses the reaction ATP = 3',5'-cyclic AMP + diphosphate. In Pasteurella multocida (strain Pm70), this protein is Adenylate cyclase (cya).